Here is a 680-residue protein sequence, read N- to C-terminus: Galactose oxidase (680 aa).

An N-terminal signal peptide occupies residues 1–24 (MKHFLSLALCFSSINAVAVTVPHK). Positions 25–41 (SGGTGSPEGSLQFLSLR) are excised as a propeptide. In terms of domain architecture, F5/8 type C spans 42–189 (ASAPIGSAIS…SIAEINVFQA (148 aa)). An intrachain disulfide couples Cys59 to Cys68. 5 Kelch repeats span residues 223-268 (RVLM…HDMF), 279-321 (QIVV…TMSD), 323-372 (RVFT…LYRS), 436-490 (KILT…VLPD), and 492-544 (STFI…LLLP). Positions 269–313 (CPGISMDGNGQIVVTGGNDAKKTSLYDSSSDSWIPGPDMQVARGY) form a cross-link, 3'-(S-cysteinyl)-tyrosine (Cys-Tyr). Tyr313 contacts Cu cation. Cu cation-binding residues include Tyr536 and His537. Tyr536 serves as the catalytic Proton acceptor. Cys556 and Cys559 form a disulfide bridge. His622 contributes to the Cu cation binding site.

As to quaternary structure, monomer. Cu(2+) is required as a cofactor. Post-translationally, galactose oxidase contains a protein-derived free radical cofactor. In the active state, Tyr-313, which is cross-linked to Cys-269 via a thioether bond, is oxidized to a radical and acts with Cu(2+) as a two-electron acceptor in the oxidation reaction. The cross-link is believed to modulate the redox potential of the tyrosyl radical, which is further stabilized by a stacking interaction with Trp-331 in the active site. The post-translational formation of the cross-link is closely linked to the propeptide cleavage event, and both are copper-dependent, autocatalytic processes. The propeptide may act as an intramolecular chaperone, facilitating thioester bond formation and copper binding by positioning of active-site residues, including copper ligands.

It is found in the secreted. The enzyme catalyses D-galactose + O2 = D-galacto-hexodialdose + H2O2. Functionally, catalyzes the sterospecific oxidation of primary alcohols to the corresponding aldehydes. The biologically relevant substrate of the enzyme is not known as the enzyme exhibits broad substrate specificity from small alcohols through sugars to oligo- and polysaccharides. The protein is Galactose oxidase (GAOA) of Gibberella zeae (strain ATCC MYA-4620 / CBS 123657 / FGSC 9075 / NRRL 31084 / PH-1) (Wheat head blight fungus).